Reading from the N-terminus, the 519-residue chain is Membrane-bound glycerophospholipid O-acyltransferase 2 (519 aa).

Helical transmembrane passes span 22 to 42 (PIDQVNFVVCQLFALLAAVWF), 61 to 81 (TLLGLYLAFFCFGWYALHFLV), 88 to 108 (CIMIIAGVESMHQCCFVFALG), 184 to 204 (FMGILAGPLCSYKDYIAFIEG), 236 to 256 (LLVCGLSLLFHLTISSMLPVE), and 288 to 305 (YFAWTLADAINNAAGFGF). Catalysis depends on residues N341 and H372. 3 consecutive transmembrane segments (helical) span residues 365 to 385 (FFLSAIWHGVYPGYYLTFLTG), 415 to 435 (IITWAATQITISYTVVPFVLL), and 443 to 463 (FYRSWYYCLHICSILVLLLLP).

The protein belongs to the membrane-bound acyltransferase family.

It localises to the endoplasmic reticulum membrane. The enzyme catalyses a 1-acyl-sn-glycero-3-phosphocholine + an acyl-CoA = a 1,2-diacyl-sn-glycero-3-phosphocholine + CoA. It carries out the reaction a 1-acyl-sn-glycero-3-phosphoethanolamine + an acyl-CoA = a 1,2-diacyl-sn-glycero-3-phosphoethanolamine + CoA. It catalyses the reaction a 1-acyl-sn-glycero-3-phosphate + an acyl-CoA = a 1,2-diacyl-sn-glycero-3-phosphate + CoA. The catalysed reaction is (9Z)-hexadecenoyl-CoA + 1-hexadecanoyl-sn-glycero-3-phosphocholine = 1-hexadecanoyl-2-(9Z-hexadecenoyl)-sn-glycero-3-phosphocholine + CoA. The enzyme catalyses 1-hexadecanoyl-sn-glycero-3-phosphoethanolamine + (9Z)-octadecenoyl-CoA = 1-hexadecanoyl-2-(9Z-octadecenoyl)-sn-glycero-3-phosphoethanolamine + CoA. It carries out the reaction 1-hexadecanoyl-sn-glycero-3-phosphoethanolamine + (9Z)-hexadecenoyl-CoA = 1-hexadecanoyl-2-(9Z)-hexadecenoyl-sn-glycero-3-phosphoethanolamine + CoA. It catalyses the reaction 1-(9Z-octadecenoyl)-sn-glycero-3-phospho-L-serine + hexadecanoyl-CoA = 1-(9Z)-octadecenoyl-2-hexadecanoyl-sn-glycero-3-phosphoserine + CoA. The catalysed reaction is (9Z,12Z)-octadecadienoyl-CoA + 1-hexadecanoyl-sn-glycero-3-phosphocholine = 1-hexadecanoyl-2-(9Z,12Z-octadecadienoyl)-sn-glycero-3-phosphocholine + CoA. The enzyme catalyses 1-hexadecanoyl-sn-glycero-3-phosphocholine + (9Z)-octadecenoyl-CoA = 1-hexadecanoyl-2-(9Z-octadecenoyl)-sn-glycero-3-phosphocholine + CoA. It carries out the reaction 1-hexadecanoyl-sn-glycero-3-phosphate + (9Z)-hexadecenoyl-CoA = 1-hexadecanoyl-2-[(9Z)-hexadec-9-enoyl]-sn-glycero-3-phosphate + CoA. It catalyses the reaction 1-hexadecanoyl-sn-glycero-3-phosphate + (9Z)-octadecenoyl-CoA = 1-hexadecanoyl-2-(9Z-octadecenoyl)-sn-glycero-3-phosphate + CoA. The catalysed reaction is a 1-O-(1Z-alkenyl)-sn-glycero-3-phosphocholine + (9Z)-octadecenoyl-CoA = 1-O-(1Z)-alkenyl-2-(9Z)-octadecenoyl-sn-glycero-3-phosphocholine + CoA. The enzyme catalyses a 1-O-(1Z-alkenyl)-sn-glycero-3-phosphoethanolamine + (9Z)-octadecenoyl-CoA = 1-O-(1Z)-alkenyl-2-(9Z)-octadecenoyl-sn-glycero-3-phosphoethanolamine + CoA. It carries out the reaction 1-octadecanoyl-sn-glycero-3-phosphoethanolamine + (9Z)-octadecenoyl-CoA = 1-octadecanoyl-2-(9Z-octadecenoyl)-sn-glycero-3-phosphoethanolamine + CoA. It catalyses the reaction 1-octadecanoyl-sn-glycero-3-phosphocholine + (9Z)-octadecenoyl-CoA = 1-octadecanoyl-2-(9Z-octadecenoyl)-sn-glycero-3-phosphocholine + CoA. The catalysed reaction is 1-(9Z-octadecenoyl)-sn-glycero-3-phosphoethanolamine + (9Z)-octadecenoyl-CoA = 1,2-di-(9Z-octadecenoyl)-sn-glycero-3-phosphoethanolamine + CoA. It participates in lipid metabolism; phospholipid metabolism. With respect to regulation, partially inhibited by thimerosal. In terms of biological role, acyltransferase which catalyzes the transfer of an acyl group from an acyl-CoA to a lysophospholipid leading to the production of a phospholipid and participates in the reacylation step of the phospholipid remodeling pathway also known as the Lands cycle. May catalyze preferentially the acylation of lysophosphatidylethanolamine (1-acyl-sn-glycero-3-phosphoethanolamine or LPE) and lysophosphatidic acid (LPA) and to a lesser extend lysophosphatidylcholine (LPC) and lysophosphatidylserine (LPS). Prefers oleoyl-CoA as the acyl donor. May be involved in chondrocyte differentiation. This Rattus norvegicus (Rat) protein is Membrane-bound glycerophospholipid O-acyltransferase 2.